Reading from the N-terminus, the 1128-residue chain is Nck-associated protein 1 (1128 aa).

Residues 640–665 (AVNKKSKKQTGKKGEPEREKPGVESM) are disordered. Residues 651-665 (KKGEPEREKPGVESM) are compositionally biased toward basic and acidic residues. The helical transmembrane segment at 995–1015 (IACLLMVFVAVSMPTLASNVM) threads the bilayer.

Belongs to the HEM-1/HEM-2 family.

The protein localises to the cell membrane. Its subcellular location is the cell projection. The protein resides in the lamellipodium membrane. Functionally, part of the WAVE complex that regulates lamellipodia formation. The WAVE complex regulates actin filament reorganization via its interaction with the Arp2/3 complex. Actin remodeling activity is regulated by RAC1. Plays a role in neural tube closure. The chain is Nck-associated protein 1 (nckap1) from Danio rerio (Zebrafish).